A 64-amino-acid chain; its full sequence is Prokaryotic ubiquitin-like protein Pup (64 aa).

Residues 1 to 37 (MAQEQTKRGGGGGEDDDLSGGAGAGQERREKLAEETD) are disordered. The segment at 21 to 58 (GAGAGQERREKLAEETDDLLDEIDDVLEENAEDFVRAY) is ARC ATPase binding. Positions 24–52 (AGQERREKLAEETDDLLDEIDDVLEENAE) form a coiled coil. Glutamine 64 is modified (deamidated glutamine). An Isoglutamyl lysine isopeptide (Gln-Lys) (interchain with K-? in acceptor proteins) cross-link involves residue glutamine 64.

It belongs to the prokaryotic ubiquitin-like protein family. As to quaternary structure, strongly interacts with the proteasome-associated ATPase ARC through a hydrophobic interface; the interacting region of Pup lies in its C-terminal half. There is one Pup binding site per ARC hexamer ring. In terms of processing, is modified by deamidation of its C-terminal glutamine to glutamate by the deamidase Dop, a prerequisite to the subsequent pupylation process.

Its pathway is protein degradation; proteasomal Pup-dependent pathway. Its function is as follows. Protein modifier that is covalently attached to lysine residues of substrate proteins, thereby targeting them for proteasomal degradation. The tagging system is termed pupylation. The polypeptide is Prokaryotic ubiquitin-like protein Pup (Mycobacterium sp. (strain JLS)).